Here is a 212-residue protein sequence, read N- to C-terminus: NADH-quinone oxidoreductase subunit I (212 aa).

4Fe-4S ferredoxin-type domains lie at 76–105 and 115–144; these read RLLE…IITD and LNYS…HGDL. Positions 85, 88, 91, 95, 124, 127, 130, and 134 each coordinate [4Fe-4S] cluster.

Belongs to the complex I 23 kDa subunit family. As to quaternary structure, NDH-1 is composed of 14 different subunits. Subunits NuoA, H, J, K, L, M, N constitute the membrane sector of the complex. [4Fe-4S] cluster is required as a cofactor.

Its subcellular location is the cell inner membrane. The catalysed reaction is a quinone + NADH + 5 H(+)(in) = a quinol + NAD(+) + 4 H(+)(out). In terms of biological role, NDH-1 shuttles electrons from NADH, via FMN and iron-sulfur (Fe-S) centers, to quinones in the respiratory chain. The immediate electron acceptor for the enzyme in this species is believed to be ubiquinone. Couples the redox reaction to proton translocation (for every two electrons transferred, four hydrogen ions are translocated across the cytoplasmic membrane), and thus conserves the redox energy in a proton gradient. This Helicobacter hepaticus (strain ATCC 51449 / 3B1) protein is NADH-quinone oxidoreductase subunit I.